The sequence spans 270 residues: Aliphatic sulfonates import ATP-binding protein SsuB 1 (270 aa).

Residues Val-18–Ile-232 enclose the ABC transporter domain. Gly-50–Thr-57 lines the ATP pocket. The interval Pro-247–Arg-270 is disordered. Positions Pro-251 to Ser-261 are enriched in polar residues.

Belongs to the ABC transporter superfamily. Aliphatic sulfonates importer (TC 3.A.1.17.2) family. In terms of assembly, the complex is composed of two ATP-binding proteins (SsuB), two transmembrane proteins (SsuC) and a solute-binding protein (SsuA).

The protein localises to the cell inner membrane. It catalyses the reaction ATP + H2O + aliphatic sulfonate-[sulfonate-binding protein]Side 1 = ADP + phosphate + aliphatic sulfonateSide 2 + [sulfonate-binding protein]Side 1.. Functionally, part of the ABC transporter complex SsuABC involved in aliphatic sulfonates import. Responsible for energy coupling to the transport system. The protein is Aliphatic sulfonates import ATP-binding protein SsuB 1 of Pseudomonas syringae pv. tomato (strain ATCC BAA-871 / DC3000).